Consider the following 111-residue polypeptide: Aspartate 1-decarboxylase (111 aa).

Residue S25 is the Schiff-base intermediate with substrate; via pyruvic acid of the active site. At S25 the chain carries Pyruvic acid (Ser). T57 serves as a coordination point for substrate. Catalysis depends on Y58, which acts as the Proton donor. 73 to 75 (GPA) provides a ligand contact to substrate.

This sequence belongs to the PanD family. In terms of assembly, heterooctamer of four alpha and four beta subunits. Pyruvate is required as a cofactor. In terms of processing, is synthesized initially as an inactive proenzyme, which is activated by self-cleavage at a specific serine bond to produce a beta-subunit with a hydroxyl group at its C-terminus and an alpha-subunit with a pyruvoyl group at its N-terminus.

The protein resides in the cytoplasm. The enzyme catalyses L-aspartate + H(+) = beta-alanine + CO2. The protein operates within cofactor biosynthesis; (R)-pantothenate biosynthesis; beta-alanine from L-aspartate: step 1/1. Functionally, catalyzes the pyruvoyl-dependent decarboxylation of aspartate to produce beta-alanine. This chain is Aspartate 1-decarboxylase, found in Francisella tularensis subsp. novicida (strain U112).